We begin with the raw amino-acid sequence, 432 residues long: Putative D-alanyl-D-alanine carboxypeptidase (432 aa).

Residues 7 to 25 form a helical; Signal-anchor membrane-spanning segment; that stretch reads ATVLLTFSLSAFAVEYPVL.

Belongs to the peptidase S12 family. YfeW subfamily.

The protein localises to the cell inner membrane. It carries out the reaction Preferential cleavage: (Ac)2-L-Lys-D-Ala-|-D-Ala. Also transpeptidation of peptidyl-alanyl moieties that are N-acyl substituents of D-alanine.. The protein is Putative D-alanyl-D-alanine carboxypeptidase of Salmonella typhi.